Here is a 191-residue protein sequence, read N- to C-terminus: Clusterin (191 aa).

Residues Asn79, Asn116, Asn142, and Asn162 are each glycosylated (N-linked (GlcNAc...) asparagine). Residue Ser184 is modified to Phosphoserine.

Belongs to the clusterin family. In terms of assembly, antiparallel disulfide-linked heterodimer of an alpha chain and a beta chain. Self-associates and forms higher oligomers. Interacts with a broad range of misfolded proteins, including APP, APOC2 and LYZ. Slightly acidic pH promotes interaction with misfolded proteins. Forms high-molecular weight oligomers upon interaction with misfolded proteins. Interacts with APOA1, LRP2, CLUAP1 and PON1. Interacts with the complement membrane attack complex. Interacts (via alpha chain) with XRCC6. Interacts with SYVN1, COMMD1, BTRC, CUL1 and with ubiquitin and SCF (SKP1-CUL1-F-box protein) E3 ubiquitin-protein ligase complexes. Interacts (via alpha chain) with BAX in stressed cells, where BAX undergoes a conformation change leading to association with the mitochondrial membrane. Does not interact with BAX in unstressed cells. Found in a complex with LTF, CLU, EPPIN and SEMG1. Interacts (immaturely glycosylated pre-secreted form) with HSPA5; this interaction promotes CLU stability and facilitates stress-induced CLU retrotranslocation from the secretory pathway to the mitochondria, thereby reducing stress-induced apoptosis by stabilizing mitochondrial membrane integrity. Interacts with BCL2L1; this interaction releases and activates BAX and promotes cell death. Interacts with TGFBR2 and ACVR1. Interacts (secreted form) with STMN3; this interaction may act as an important modulator during neuronal differentiation. In terms of processing, proteolytically cleaved on its way through the secretory system, probably within the Golgi lumen. Proteolytic cleavage is not necessary for its chaperone activity. All non-secreted forms are not proteolytically cleaved. Chaperone activity of uncleaved forms is dependent on a non-reducing environment. Post-translationally, polyubiquitinated, leading to proteasomal degradation. Under cellular stress, the intracellular level of cleaved form is reduced due to proteasomal degradation. Heavily N-glycosylated. About 30% of the protein mass is comprised of complex N-linked carbohydrate. Endoplasmic reticulum (ER) stress induces changes in glycosylation status and increases level of hypoglycosylated forms. Core carbohydrates are essential for chaperone activity. Non-secreted forms are hypoglycosylated or unglycosylated.

Its subcellular location is the secreted. It localises to the nucleus. The protein localises to the cytoplasm. The protein resides in the mitochondrion membrane. It is found in the cytosol. Its subcellular location is the microsome. It localises to the endoplasmic reticulum. The protein localises to the mitochondrion. The protein resides in the perinuclear region. It is found in the cytoplasmic vesicle. Its subcellular location is the secretory vesicle. It localises to the chromaffin granule. Its function is as follows. Functions as extracellular chaperone that prevents aggregation of non native proteins. Prevents stress-induced aggregation of blood plasma proteins. Inhibits formation of amyloid fibrils by APP, APOC2, B2M, CALCA, CSN3, SNCA and aggregation-prone LYZ variants (in vitro). Does not require ATP. Maintains partially unfolded proteins in a state appropriate for subsequent refolding by other chaperones, such as HSPA8/HSC70. Does not refold proteins by itself. Binding to cell surface receptors triggers internalization of the chaperone-client complex and subsequent lysosomal or proteasomal degradation. When secreted, protects cells against apoptosis and against cytolysis by complement: inhibits assembly of the complement membrane attack complex (MAC) by preventing polymerization of C9 pore component of the MAC complex. Intracellular forms interact with ubiquitin and SCF (SKP1-CUL1-F-box protein) E3 ubiquitin-protein ligase complexes and promote the ubiquitination and subsequent proteasomal degradation of target proteins. Promotes proteasomal degradation of COMMD1 and IKBKB. Modulates NF-kappa-B transcriptional activity. Following stress, promotes apoptosis. Inhibits apoptosis when associated with the mitochondrial membrane by interference with BAX-dependent release of cytochrome c into the cytoplasm. Plays a role in the regulation of cell proliferation. An intracellular form suppresses stress-induced apoptosis by stabilizing mitochondrial membrane integrity through interaction with HSPA5. Secreted form does not affect caspase or BAX-mediated intrinsic apoptosis and TNF-induced NF-kappa-B-activity. Secreted form act as an important modulator during neuronal differentiation through interaction with STMN3. Plays a role in the clearance of immune complexes that arise during cell injury. The protein is Clusterin of Mesocricetus auratus (Golden hamster).